The sequence spans 100 residues: UPF0251 protein swp_0615 (100 aa).

The protein belongs to the UPF0251 family.

The sequence is that of UPF0251 protein swp_0615 from Shewanella piezotolerans (strain WP3 / JCM 13877).